Here is a 720-residue protein sequence, read N- to C-terminus: Receptor-like protein CLAVATA2 (720 aa).

The first 25 residues, 1-25 (MIKIADFTLFFFIFVFSPSLPLAQS), serve as a signal peptide directing secretion. The N-cap stretch occupies residues 26-92 (QLPDLDPQDK…LNLSSQIHPS (67 aa)). Topologically, residues 26–686 (QLPDLDPQDK…QNELVEGPIS (661 aa)) are extracellular. Residues N49, N62, N84, N108, N127, and N168 are each glycosylated (N-linked (GlcNAc...) asparagine). C60 and C68 are joined by a disulfide. LRR repeat units lie at residues 96–122 (LSSL…SLRN), 124–144 (RTLN…FVSL), 146–168 (ELRE…WFGN), 170–194 (SMNL…LLYL), 195–217 (KSLK…FQQP), 219–238 (VVLN…FYAS), 239–263 (RPSL…LGSL), 264–287 (KELS…LMFS), 288–311 (EKLV…ISET), 314–338 (KLGL…ITEL), 339–362 (KSLQ…IGNL), 364–386 (YLQV…IVGC), 388–410 (QLLA…LDAL), 411–436 (DSLK…GLKS), 438–458 (EIVD…ITKW), 459–482 (SNLK…LFKF), 484–506 (KIQM…NLNS), 547–571 (LLSM…LFRQ), 573–594 (NIEY…LEKL), 595–617 (PRLK…NISA), and 619–641 (PGLT…KEGL). N206 carries N-linked (GlcNAc...) asparagine glycosylation. The N-linked (GlcNAc...) asparagine glycan is linked to N270. An N-linked (GlcNAc...) asparagine glycan is attached at N361. N398 carries an N-linked (GlcNAc...) asparagine glycan. N446 carries an N-linked (GlcNAc...) asparagine glycan. N-linked (GlcNAc...) asparagine glycosylation occurs at N505. 3 N-linked (GlcNAc...) asparagine glycosylation sites follow: N578, N614, and N625. The interval 649–682 (AGNPELCVETPGSKCDPANIDASQEEIYQNELVE) is C-cap/acidic domain. The chain crosses the membrane as a helical span at residues 687–707 (IWIFCLSAFISFDFGVLGIFC). Over 708–720 (SARARSYILQTKA) the chain is Cytoplasmic.

Belongs to the RLP family. Parts of a tetrameric complex made of two CLV2/CRN heterodimers that can interact with CLV3 and CLE peptides. CLV2/CRN heterodimer interacts with CLV1 homodimers. Interacts with CRN; this dimer can interact with BAM3. Interacts with CLE14. As to expression, mostly expressed in apices (e.g. shoot apical meristem and flower buds), and, to a lower extent, in flowers, leaves, seedlings and siliques. Also expressed in the inner tissues of the proximal root meristem. Expressed throughout the vascular cylinder of root tips.

The protein localises to the cell membrane. It is found in the endoplasmic reticulum membrane. Involved in the perception of CLV3 and CLV3-like (CLE) peptides, that act as extracellular signals regulating meristems maintenance. Required for the sensing of the root CLE peptides (e.g. CLE8, CLE9/CLE10, CLE11, CLE13, CLE14, CLE16, CLE17, CLE18, CLE20, CLE21, CLE25, CLE26, CLE40, CLE41/CLE44 and CLE45), which also involves CRN and leads to root growth regulation, mostly in the phloem and protophloem. Involved in controlling the stem cell population size in shoot and root apical meristems, and during organ development. Promotes the formation of CLV1 multimers. In complex with CRN, perceives secreted CLV3-like effector proteins from plant-parasitic cyst nematodes as ligand mimics of the plant CLE signaling pathway. This recognition is required for proper feeding structure (syncytium) development and ultimately successful nematode infection. CLE14 perception by CLV2/CRN complex triggers root meristem differentiation. The polypeptide is Receptor-like protein CLAVATA2 (Arabidopsis thaliana (Mouse-ear cress)).